Consider the following 643-residue polypeptide: NADH-ubiquinone oxidoreductase chain 5 (643 aa).

16 helical membrane-spanning segments follow: residues 7 to 27 (IIIL…VFFF), 64 to 84 (LLKT…IFNI), 114 to 134 (TFLS…YYYM), 140 to 160 (PNNF…LTST), 163 to 183 (IFLL…LISW), 208 to 228 (ILLF…PEIF), 230 to 250 (ISAP…AAAG), 277 to 297 (SSTM…LYAC), 301 to 321 (FNTW…TTAI), 338 to 358 (LGLM…FHIC), 398 to 418 (AACI…PGFY), 437 to 457 (IVLS…IIFF), 486 to 506 (ALGT…VPII), 511 to 531 (VLKT…ISIL), 555 to 575 (FYEN…SLSL), and 615 to 635 (YLLF…TTIS).

This sequence belongs to the complex I subunit 5 family.

The protein localises to the mitochondrion inner membrane. It catalyses the reaction a ubiquinone + NADH + 5 H(+)(in) = a ubiquinol + NAD(+) + 4 H(+)(out). Functionally, core subunit of the mitochondrial membrane respiratory chain NADH dehydrogenase (Complex I) that is believed to belong to the minimal assembly required for catalysis. Complex I functions in the transfer of electrons from NADH to the respiratory chain. The immediate electron acceptor for the enzyme is believed to be ubiquinone. The sequence is that of NADH-ubiquinone oxidoreductase chain 5 (ND5) from Patiria pectinifera (Starfish).